Here is a 350-residue protein sequence, read N- to C-terminus: ADP-ribosylhydrolase ARH3 (350 aa).

Mg(2+) contacts are provided by Glu-27, Thr-57, Asp-58, and Asp-59. Residue Asp-58 coordinates substrate. Substrate contacts are provided by residues 127–133 (KGSYGNG), His-163, Leu-216, and Ile-252. Asp-295, Asp-297, and Thr-298 together coordinate Mg(2+).

Belongs to the ADP-ribosylglycohydrolase family. In terms of assembly, monomer. Requires Mg(2+) as cofactor.

It is found in the nucleus. The protein localises to the cytoplasm. Its subcellular location is the chromosome. The protein resides in the mitochondrion matrix. It carries out the reaction [(1''-&gt;2')-ADP-alpha-D-ribose](n) + H2O = [(1''-&gt;2')-ADP-alpha-D-ribose](n-1) + ADP-D-ribose. The enzyme catalyses 1''-O-acetyl-ADP-alpha-D-ribose + H2O = ADP-D-ribose + acetate + H(+). The catalysed reaction is O-(ADP-D-ribosyl)-L-seryl-[protein] + H2O = ADP-D-ribose + L-seryl-[protein]. It catalyses the reaction alpha-NAD(+) + H2O = ADP-D-ribose + nicotinamide + H(+). Its activity is regulated as follows. The protein undergoes a dramatic conformational switch from closed to open states upon substrate-binding, which enables specific substrate recognition for the 1''-O-linkage. The glutamate flap (Glu-27) blocks substrate entrance to Mg(2+) in the unliganded closed state. In presence of substrate, Glu-27 is ejected from the active site: this closed-to-open transition significantly widens the substrate-binding channel and precisely positions the scissile 1''-O-linkage for cleavage while securing tightly 2'- and 3'-hydroxyls of ADP-ribose. ADP-ribosylhydrolase that preferentially hydrolyzes the scissile alpha-O-linkage attached to the anomeric C1'' position of ADP-ribose and acts on different substrates, such as proteins ADP-ribosylated on serine and threonine, free poly(ADP-ribose) and O-acetyl-ADP-D-ribose. Specifically acts as a serine mono-ADP-ribosylhydrolase by mediating the removal of mono-ADP-ribose attached to serine residues on proteins, thereby playing a key role in DNA damage response. Serine ADP-ribosylation of proteins constitutes the primary form of ADP-ribosylation of proteins in response to DNA damage. Does not hydrolyze ADP-ribosyl-arginine, -cysteine, -diphthamide, or -asparagine bonds. Also able to degrade protein free poly(ADP-ribose), which is synthesized in response to DNA damage: free poly(ADP-ribose) acts as a potent cell death signal and its degradation by ADPRHL2 protects cells from poly(ADP-ribose)-dependent cell death, a process named parthanatos. Also hydrolyzes free poly(ADP-ribose) in mitochondria. Specifically digests O-acetyl-ADP-D-ribose, a product of deacetylation reactions catalyzed by sirtuins. Specifically degrades 1''-O-acetyl-ADP-D-ribose isomer, rather than 2''-O-acetyl-ADP-D-ribose or 3''-O-acetyl-ADP-D-ribose isomers. The chain is ADP-ribosylhydrolase ARH3 (adprs) from Xenopus tropicalis (Western clawed frog).